Consider the following 326-residue polypeptide: Ribonuclease H2 subunit A (326 aa).

The tract at residues 1-47 (MKDDHDAWEPEELVSDNNSSENELQEDQNSSITFLPPSVNKSNPAKS) is disordered. Residues 15-47 (SDNNSSENELQEDQNSSITFLPPSVNKSNPAKS) are compositionally biased toward polar residues. An RNase H type-2 domain is found at 63 to 286 (PYRLGVDEAG…AKDLLELPSK (224 aa)). The a divalent metal cation site is built by aspartate 69, glutamate 70, and aspartate 180.

It belongs to the RNase HII family. Eukaryotic subfamily. Mn(2+) is required as a cofactor. Mg(2+) serves as cofactor.

The enzyme catalyses Endonucleolytic cleavage to 5'-phosphomonoester.. Functionally, endonuclease that specifically degrades the RNA of RNA-DNA hybrids. Participates in DNA replication. In Schizosaccharomyces pombe (strain 972 / ATCC 24843) (Fission yeast), this protein is Ribonuclease H2 subunit A (rnh201).